A 241-amino-acid polypeptide reads, in one-letter code: Putative CRISPR-associated endoribonuclease-like protein Cas6 (241 aa).

Belongs to the CRISPR-associated protein Cas6/Cse3/CasE family. Binds crRNA.

In terms of biological role, CRISPR (clustered regularly interspaced short palindromic repeat), is an adaptive immune system that provides protection against mobile genetic elements (viruses, transposable elements and conjugative plasmids). CRISPR clusters contain sequences complementary to antecedent mobile elements and target invading nucleic acids. CRISPR clusters are transcribed and processed into CRISPR RNA (crRNA), also called psiRNA (prokaryotic silencing) in this organism (Potential). The sequence is that of Putative CRISPR-associated endoribonuclease-like protein Cas6 (cas6b) from Pyrococcus furiosus (strain ATCC 43587 / DSM 3638 / JCM 8422 / Vc1).